A 39-amino-acid chain; its full sequence is Cytochrome b559 subunit beta (39 aa).

Residues 14–30 traverse the membrane as a helical segment; sequence WLTVHGLAVPTVSFLGS. His-18 is a heme binding site.

It belongs to the PsbE/PsbF family. Heterodimer of an alpha subunit and a beta subunit. PSII is composed of 1 copy each of membrane proteins PsbA, PsbB, PsbC, PsbD, PsbE, PsbF, PsbH, PsbI, PsbJ, PsbK, PsbL, PsbM, PsbT, PsbX, PsbY, PsbZ, Psb30/Ycf12, at least 3 peripheral proteins of the oxygen-evolving complex and a large number of cofactors. It forms dimeric complexes. Heme b is required as a cofactor.

Its subcellular location is the plastid. The protein resides in the chloroplast thylakoid membrane. This b-type cytochrome is tightly associated with the reaction center of photosystem II (PSII). PSII is a light-driven water:plastoquinone oxidoreductase that uses light energy to abstract electrons from H(2)O, generating O(2) and a proton gradient subsequently used for ATP formation. It consists of a core antenna complex that captures photons, and an electron transfer chain that converts photonic excitation into a charge separation. The sequence is that of Cytochrome b559 subunit beta from Cucumis sativus (Cucumber).